The chain runs to 538 residues: Phosphoenolpyruvate carboxykinase (ATP) (538 aa).

Arg-64 is a substrate binding site. Positions 149 and 151 each coordinate Ca(2+). Substrate is bound by residues Tyr-206 and Lys-212. ATP contacts are provided by residues Lys-212, His-231, and 247–255; that span reads GLSGTGKTT. 2 residues coordinate Mn(2+): Lys-212 and His-231. Asp-268 contributes to the Mn(2+) binding site. Residues Glu-296, Arg-332, 447 to 448, and Thr-453 each bind ATP; that span reads RI. Arg-332 is a binding site for substrate.

This sequence belongs to the phosphoenolpyruvate carboxykinase (ATP) family. Monomer. The cofactor is Mn(2+).

Its subcellular location is the cytoplasm. The catalysed reaction is oxaloacetate + ATP = phosphoenolpyruvate + ADP + CO2. The protein operates within carbohydrate biosynthesis; gluconeogenesis. With respect to regulation, allosterically activated by calcium. Functionally, involved in the gluconeogenesis. Catalyzes the conversion of oxaloacetate (OAA) to phosphoenolpyruvate (PEP) through direct phosphoryl transfer between the nucleoside triphosphate and OAA. In Salmonella typhimurium (strain LT2 / SGSC1412 / ATCC 700720), this protein is Phosphoenolpyruvate carboxykinase (ATP).